We begin with the raw amino-acid sequence, 284 residues long: GPN-loop GTPase 3 (284 aa).

13–18 is a binding site for GTP; the sequence is GSGKST. A Gly-Pro-Asn (GPN)-loop; involved in dimer interface motif is present at residues 72-74; that stretch reads GPN. Position 174-177 (174-177) interacts with GTP; sequence TKMD.

Belongs to the GPN-loop GTPase family. In terms of assembly, heterodimer with GPN1. Binds to RNA polymerase II (RNAPII). Interacts directly with subunits RPB4 and RPB7 and the CTD of RPB1.

Its function is as follows. Small GTPase required for proper localization of RNA polymerase II (RNAPII). May act at an RNAP assembly step prior to nuclear import. In Homo sapiens (Human), this protein is GPN-loop GTPase 3.